The sequence spans 243 residues: Geranylgeranylglyceryl phosphate synthase (243 aa).

The Mg(2+) site is built by Asp29 and Ser58. Sn-glycerol 1-phosphate contacts are provided by residues 178–184 (YLEAGSG), 209–210 (GG), and 231–232 (GT).

This sequence belongs to the GGGP/HepGP synthase family. Group II subfamily. As to quaternary structure, homodimer. Requires Mg(2+) as cofactor.

The enzyme catalyses sn-glycerol 1-phosphate + (2E,6E,10E)-geranylgeranyl diphosphate = sn-3-O-(geranylgeranyl)glycerol 1-phosphate + diphosphate. In terms of biological role, prenyltransferase that catalyzes the transfer of the geranylgeranyl moiety of geranylgeranyl diphosphate (GGPP) to the C3 hydroxyl of sn-glycerol-1-phosphate (G1P). The polypeptide is Geranylgeranylglyceryl phosphate synthase (Flavobacterium johnsoniae (strain ATCC 17061 / DSM 2064 / JCM 8514 / BCRC 14874 / CCUG 350202 / NBRC 14942 / NCIMB 11054 / UW101) (Cytophaga johnsonae)).